A 262-amino-acid chain; its full sequence is Type III pantothenate kinase (262 aa).

An ATP-binding site is contributed by 9–16 (DAGNSRIK). Substrate-binding positions include Y96 and 103–106 (GSDR). D105 (proton acceptor) is an active-site residue. T129 contributes to the ATP binding site. T189 contacts substrate.

Belongs to the type III pantothenate kinase family. Homodimer. The cofactor is NH4(+). K(+) is required as a cofactor.

It localises to the cytoplasm. It carries out the reaction (R)-pantothenate + ATP = (R)-4'-phosphopantothenate + ADP + H(+). The protein operates within cofactor biosynthesis; coenzyme A biosynthesis; CoA from (R)-pantothenate: step 1/5. Functionally, catalyzes the phosphorylation of pantothenate (Pan), the first step in CoA biosynthesis. This chain is Type III pantothenate kinase, found in Burkholderia vietnamiensis (strain G4 / LMG 22486) (Burkholderia cepacia (strain R1808)).